Consider the following 480-residue polypeptide: Acyl-coenzyme A synthetase ACSM6, mitochondrial (480 aa).

The N-terminal 21 residues, 1–21 (MLGRFQPFSLVRSFRLGFEAC), are a transit peptide targeting the mitochondrion. ATP is bound by residues 226 to 234 (TKGTTGAPK), 366 to 371 (EGYGQT), D453, and R468.

The protein belongs to the ATP-dependent AMP-binding enzyme family. As to quaternary structure, monomer. Requires Mg(2+) as cofactor. Mn(2+) is required as a cofactor.

It localises to the mitochondrion. The enzyme catalyses a medium-chain fatty acid + ATP + CoA = a medium-chain fatty acyl-CoA + AMP + diphosphate. Functionally, catalyzes the activation of fatty acids by CoA to produce an acyl-CoA, the first step in fatty acid metabolism. In Homo sapiens (Human), this protein is Acyl-coenzyme A synthetase ACSM6, mitochondrial (ACSM6).